We begin with the raw amino-acid sequence, 311 residues long: MIKLLFMGTPQFSATVLKGLLDNPAYEILGVVTQPDRAVGRKKDIKVTPVKQLALEHGISIYQPEKLSGSQELIEITGLGADGIITAAFGQFLPTLLLDSVSFAINVHASLLPKYRGGAPIHYAIMNGDKEAGVTIMEMIKEMDAGDVVAKASTPILETDNVGTLFEKLAIIGRDLLLDSLPAYLSGELKPIPQDHSQATFSPNISPEQEKLDWTMSNQEVFNHIRGMNPWPVAHTFLEGQRLKIYEAQLAEGEGLPGQVIVKTKKSLVIATGQGALSLIVVQPAGKPKMSIIDFLNGIGRKLEVGDIIGR.

(6S)-5,6,7,8-tetrahydrofolate is bound at residue 110–113 (SLLP).

The protein belongs to the Fmt family.

It carries out the reaction L-methionyl-tRNA(fMet) + (6R)-10-formyltetrahydrofolate = N-formyl-L-methionyl-tRNA(fMet) + (6S)-5,6,7,8-tetrahydrofolate + H(+). Attaches a formyl group to the free amino group of methionyl-tRNA(fMet). The formyl group appears to play a dual role in the initiator identity of N-formylmethionyl-tRNA by promoting its recognition by IF2 and preventing the misappropriation of this tRNA by the elongation apparatus. This is Methionyl-tRNA formyltransferase from Streptococcus pyogenes serotype M6 (strain ATCC BAA-946 / MGAS10394).